Reading from the N-terminus, the 235-residue chain is Interleukin-34 (235 aa).

Residues 1 to 20 form the signal peptide; the sequence is MPWGLAWLYCLGILLDVALG. An N-linked (GlcNAc...) asparagine glycan is attached at Asn-100.

Belongs to the IL-34 family. In terms of assembly, homodimer. Interacts with CSF1R.

It localises to the secreted. In terms of biological role, cytokine that promotes the proliferation, survival and differentiation of monocytes and macrophages. Promotes the release of pro-inflammatory chemokines, and thereby plays an important role in innate immunity and in inflammatory processes. Plays an important role in the regulation of osteoclast proliferation and differentiation, and in the regulation of bone resorption. Signaling via CSF1R and its downstream effectors stimulates phosphorylation of MAPK1/ERK2 AND MAPK3/ERK1. This is Interleukin-34 (Il34) from Mus musculus (Mouse).